The chain runs to 589 residues: 3-(3-hydroxy-phenyl)propionate/3-hydroxycinnamic acid hydroxylase (589 aa).

FAD contacts are provided by residues 15–44 (DVLIIGAGPVGLTLANTLGMAGVRVIVAEK) and 283–293 (FRVDRILLAGD).

It belongs to the PheA/TfdB FAD monooxygenase family. FAD serves as cofactor.

It catalyses the reaction 3-(3-hydroxyphenyl)propanoate + NADH + O2 + H(+) = 3-(2,3-dihydroxyphenyl)propanoate + NAD(+) + H2O. It carries out the reaction (2E)-3-(3-hydroxyphenyl)prop-2-enoate + NADH + O2 + H(+) = (2E)-3-(2,3-dihydroxyphenyl)prop-2-enoate + NAD(+) + H2O. The protein operates within aromatic compound metabolism; 3-phenylpropanoate degradation. Its function is as follows. Catalyzes the insertion of one atom of molecular oxygen into position 2 of the phenyl ring of 3-(3-hydroxyphenyl)propionate (3-HPP) and hydroxycinnamic acid (3HCI). The chain is 3-(3-hydroxy-phenyl)propionate/3-hydroxycinnamic acid hydroxylase from Comamonas testosteroni (Pseudomonas testosteroni).